A 102-amino-acid polypeptide reads, in one-letter code: Malonate decarboxylase acyl carrier protein (102 aa).

Residue serine 27 is modified to O-(phosphoribosyl dephospho-coenzyme A)serine.

It belongs to the MdcC family. Post-translationally, covalently binds the prosthetic group of malonate decarboxylase.

It is found in the cytoplasm. In terms of biological role, subunit of malonate decarboxylase, it is an acyl carrier protein to which acetyl and malonyl thioester residues are bound via a 2'-(5''-phosphoribosyl)-3'-dephospho-CoA prosthetic group and turn over during the catalytic mechanism. This chain is Malonate decarboxylase acyl carrier protein, found in Acinetobacter calcoaceticus.